An 825-amino-acid chain; its full sequence is PR domain zinc finger protein 1 (825 aa).

Residues 84 to 201 (PRNLLFKYAT…ANQELLVWYC (118 aa)) enclose the SET domain. A compositionally biased stretch (low complexity) spans 324–361 (ITRSPIPSSTTPSPSARSSPDQSLKSSSPHSSPGNTVS). Positions 324–369 (ITRSPIPSSTTPSPSARSSPDQSLKSSSPHSSPGNTVSPVGPGSQE) are disordered. Residues 527 to 574 (HVVQPKATSAAMAAPSSDEAMNLIKNKRNMTGYKTLPYPLKKQNGKIK) form an interaction with PIAS1 region. C2H2-type zinc fingers lie at residues 575-597 (YECN…LRVH), 603-625 (FKCQ…YLVH), 631-653 (HECQ…LRLH), and 659-681 (YQCK…KRLH). Residue K816 forms a Glycyl lysine isopeptide (Lys-Gly) (interchain with G-Cter in SUMO1); alternate linkage. K816 is covalently cross-linked (Glycyl lysine isopeptide (Lys-Gly) (interchain with G-Cter in SUMO2); alternate).

This sequence belongs to the class V-like SAM-binding methyltransferase superfamily. In terms of assembly, interacts with PRMT5. Interacts with FBXO10. Interacts with FBXO11. Interacts with multiple nuclear sumoylation E3 ligases, including CBX4, PIAS1, PIAS2, PIAS3, PIAS4, PML and RNF4, but not RANBP2. Interacts with LDB1, SMARCD3 and SMARCC1. Interacts with EEIG1; following TNFSF11/RANKL stimulation in bone marrow-derived macrophages, the interaction promotes the binding of PRDM1/BLIMP1 to the gene promoter of IRF8. In terms of processing, sumoylation at Lys-816 by PIAS1 augments transcriptional repressor activity, and is critical for plasma cell differentiation. Can be sumoylated with SUMO1 and SUMO2 by PML. Degradation of the wild-type protein mostly depends upon sumoylation, rather than ubiquitination. Desumoylated by SENP1 and SENP6. Ubiquitinated by the SCF(FBXO11) complex, leading to its degradation by the proteasome.

The protein localises to the nucleus. It is found in the cytoplasm. Transcription factor that mediates a transcriptional program in various innate and adaptive immune tissue-resident lymphocyte T cell types such as tissue-resident memory T (Trm), natural killer (trNK) and natural killer T (NKT) cells and negatively regulates gene expression of proteins that promote the egress of tissue-resident T-cell populations from non-lymphoid organs. Plays a role in the development, retention and long-term establishment of adaptive and innate tissue-resident lymphocyte T cell types in non-lymphoid organs, such as the skin and gut, but also in other nonbarrier tissues like liver and kidney, and therefore may provide immediate immunological protection against reactivating infections or viral reinfection. Binds specifically to the PRDI element in the promoter of the beta-interferon gene. Drives the maturation of B-lymphocytes into Ig secreting cells. Associates with the transcriptional repressor ZNF683 to chromatin at gene promoter regions. Binds to the promoter and acts as a transcriptional repressor of IRF8, thereby promotes transcription of osteoclast differentiation factors such as NFATC1 and EEIG1. The chain is PR domain zinc finger protein 1 (PRDM1) from Homo sapiens (Human).